The primary structure comprises 470 residues: Glutamate--tRNA ligase 2 (470 aa).

A 'HIGH' region motif is present at residues 11–21; the sequence is PSPTGHLHLGG. The short motif at 238–242 is the 'KMSKS' region element; sequence KLSKR. K241 contacts ATP.

The protein belongs to the class-I aminoacyl-tRNA synthetase family. Glutamate--tRNA ligase type 1 subfamily. As to quaternary structure, monomer.

Its subcellular location is the cytoplasm. The enzyme catalyses tRNA(Glu) + L-glutamate + ATP = L-glutamyl-tRNA(Glu) + AMP + diphosphate. Catalyzes the attachment of glutamate to tRNA(Glu) in a two-step reaction: glutamate is first activated by ATP to form Glu-AMP and then transferred to the acceptor end of tRNA(Glu). The chain is Glutamate--tRNA ligase 2 from Ehrlichia ruminantium (strain Gardel).